Consider the following 296-residue polypeptide: Cytidine deaminase (296 aa).

CMP/dCMP-type deaminase domains follow at residues 48–168 and 187–296; these read DADA…FGPV and QNMN…FIEE. 89–91 lines the substrate pocket; that stretch reads NME. Residue His102 participates in Zn(2+) binding. Residue Glu104 is the Proton donor of the active site. 2 residues coordinate Zn(2+): Cys129 and Cys132.

The protein belongs to the cytidine and deoxycytidylate deaminase family. Homodimer. The cofactor is Zn(2+).

It catalyses the reaction cytidine + H2O + H(+) = uridine + NH4(+). It carries out the reaction 2'-deoxycytidine + H2O + H(+) = 2'-deoxyuridine + NH4(+). This enzyme scavenges exogenous and endogenous cytidine and 2'-deoxycytidine for UMP synthesis. In Pectobacterium carotovorum subsp. carotovorum (strain PC1), this protein is Cytidine deaminase.